The sequence spans 375 residues: 4-hydroxy-3-methylbut-2-en-1-yl diphosphate synthase (flavodoxin) (375 aa).

The [4Fe-4S] cluster site is built by Cys268, Cys271, Cys303, and Glu310.

The protein belongs to the IspG family. [4Fe-4S] cluster is required as a cofactor.

It carries out the reaction (2E)-4-hydroxy-3-methylbut-2-enyl diphosphate + oxidized [flavodoxin] + H2O + 2 H(+) = 2-C-methyl-D-erythritol 2,4-cyclic diphosphate + reduced [flavodoxin]. It functions in the pathway isoprenoid biosynthesis; isopentenyl diphosphate biosynthesis via DXP pathway; isopentenyl diphosphate from 1-deoxy-D-xylulose 5-phosphate: step 5/6. Functionally, converts 2C-methyl-D-erythritol 2,4-cyclodiphosphate (ME-2,4cPP) into 1-hydroxy-2-methyl-2-(E)-butenyl 4-diphosphate. This chain is 4-hydroxy-3-methylbut-2-en-1-yl diphosphate synthase (flavodoxin), found in Bacillus velezensis (strain DSM 23117 / BGSC 10A6 / LMG 26770 / FZB42) (Bacillus amyloliquefaciens subsp. plantarum).